The following is a 157-amino-acid chain: Beta-defensin 125 (157 aa).

Residues methionine 1 to glycine 20 form the signal peptide. 3 disulfides stabilise this stretch: cysteine 27-cysteine 55, cysteine 35-cysteine 49, and cysteine 39-cysteine 56. The tract at residues glycine 109–asparagine 157 is disordered. Positions glutamate 110–threonine 140 are enriched in low complexity. Positions alanine 141 to asparagine 157 are enriched in polar residues.

It belongs to the beta-defensin family.

Its subcellular location is the secreted. Its function is as follows. Has antibacterial activity. The polypeptide is Beta-defensin 125 (DEFB125) (Pongo pygmaeus (Bornean orangutan)).